The following is a 124-amino-acid chain: Small ribosomal subunit protein uS12 (124 aa).

D89 is subject to 3-methylthioaspartic acid. A disordered region spans residues 104–124 (ATGVKDRKQGRSKYGAKRPKE). The span at 113–124 (GRSKYGAKRPKE) shows a compositional bias: basic residues.

Belongs to the universal ribosomal protein uS12 family. As to quaternary structure, part of the 30S ribosomal subunit. Contacts proteins S8 and S17. May interact with IF1 in the 30S initiation complex.

With S4 and S5 plays an important role in translational accuracy. Its function is as follows. Interacts with and stabilizes bases of the 16S rRNA that are involved in tRNA selection in the A site and with the mRNA backbone. Located at the interface of the 30S and 50S subunits, it traverses the body of the 30S subunit contacting proteins on the other side and probably holding the rRNA structure together. The combined cluster of proteins S8, S12 and S17 appears to hold together the shoulder and platform of the 30S subunit. In Picosynechococcus sp. (strain ATCC 27264 / PCC 7002 / PR-6) (Agmenellum quadruplicatum), this protein is Small ribosomal subunit protein uS12.